The sequence spans 282 residues: Probable iron transport system membrane protein HI_0360 (282 aa).

Transmembrane regions (helical) follow at residues 17–37 (AMIL…YLML), 63–83 (LPYA…ILWI), 93–113 (AVIG…VSLN), 140–160 (IIIG…LLIF), 164–184 (TQAI…FTLL), 186–206 (ACVV…MVVT), 223–243 (IIAI…SYYL), and 245–265 (GATG…AFLF).

It belongs to the ABC-3 integral membrane protein family.

The protein resides in the cell inner membrane. Its function is as follows. Part of an ATP-driven transport system HI_0359/HI_0360/HI_0361/HI_0362 for iron. This is Probable iron transport system membrane protein HI_0360 from Haemophilus influenzae (strain ATCC 51907 / DSM 11121 / KW20 / Rd).